Consider the following 645-residue polypeptide: Translation factor GUF1 homolog, mitochondrial (645 aa).

The region spanning 40-215 (DKIRNFGIVA…AIIDRVPAPT (176 aa)) is the tr-type G domain. GTP is bound by residues 49-56 (AHVDHGKS), 108-112 (DTPGH), and 162-165 (NKID).

This sequence belongs to the TRAFAC class translation factor GTPase superfamily. Classic translation factor GTPase family. LepA subfamily.

The protein resides in the mitochondrion inner membrane. It catalyses the reaction GTP + H2O = GDP + phosphate + H(+). Promotes mitochondrial protein synthesis. May act as a fidelity factor of the translation reaction, by catalyzing a one-codon backward translocation of tRNAs on improperly translocated ribosomes. Binds to mitochondrial ribosomes in a GTP-dependent manner. In Caenorhabditis elegans, this protein is Translation factor GUF1 homolog, mitochondrial.